A 195-amino-acid polypeptide reads, in one-letter code: Cytochrome c oxidase assembly protein CtaG (195 aa).

At 1-9 the chain is on the cytoplasmic side; that stretch reads MALNGPQKT. A helical; Signal-anchor for type II membrane protein transmembrane segment spans residues 10–30; it reads VVQLVGVVVLMGGLAWASVPF. At 31–195 the chain is on the periplasmic side; that stretch reads YDWFCRVTGF…DTSGAETELN (165 aa).

Belongs to the COX11/CtaG family.

Its subcellular location is the cell inner membrane. Exerts its effect at some terminal stage of cytochrome c oxidase synthesis, probably by being involved in the insertion of the copper B into subunit I. The protein is Cytochrome c oxidase assembly protein CtaG of Ruegeria sp. (strain TM1040) (Silicibacter sp.).